A 171-amino-acid chain; its full sequence is S-ribosylhomocysteine lyase (171 aa).

Residues histidine 54, histidine 58, and cysteine 128 each contribute to the Fe cation site.

It belongs to the LuxS family. Homodimer. Requires Fe cation as cofactor.

It catalyses the reaction S-(5-deoxy-D-ribos-5-yl)-L-homocysteine = (S)-4,5-dihydroxypentane-2,3-dione + L-homocysteine. In terms of biological role, involved in the synthesis of autoinducer 2 (AI-2) which is secreted by bacteria and is used to communicate both the cell density and the metabolic potential of the environment. The regulation of gene expression in response to changes in cell density is called quorum sensing. Catalyzes the transformation of S-ribosylhomocysteine (RHC) to homocysteine (HC) and 4,5-dihydroxy-2,3-pentadione (DPD). The chain is S-ribosylhomocysteine lyase from Escherichia fergusonii (strain ATCC 35469 / DSM 13698 / CCUG 18766 / IAM 14443 / JCM 21226 / LMG 7866 / NBRC 102419 / NCTC 12128 / CDC 0568-73).